The following is a 596-amino-acid chain: Probable ABC transporter ECU01_0200/ECU01_1410 (596 aa).

A run of 3 helical transmembrane segments spans residues 26–46 (ALMAVVAACIVLGKWFDVMSI), 173–193 (LVPILFTAAAYAAYTCVMLRI), and 289–309 (LSVLFSFVLSIDASMWTLGGI). In terms of domain architecture, ABC transmembrane type-1 spans 39–318 (KWFDVMSIKR…IARDLGFWLT (280 aa)). The ABC transporter domain maps to 361–593 (VEFDDVSFAY…RGMYWRMKTA (233 aa)). ATP contacts are provided by residues tyrosine 370 and 400–411 (GRPGSGKSTILR).

It belongs to the ABC transporter superfamily. ABCB family. Heavy Metal importer (TC 3.A.1.210) subfamily.

Its subcellular location is the membrane. This Encephalitozoon cuniculi (strain GB-M1) (Microsporidian parasite) protein is Probable ABC transporter ECU01_0200/ECU01_1410.